A 492-amino-acid polypeptide reads, in one-letter code: Bifunctional purine biosynthesis protein PurH (492 aa).

Residues 1–144 (MKKAILSVSN…KNYKHVTTIV (144 aa)) enclose the MGS-like domain.

The protein belongs to the PurH family.

The enzyme catalyses (6R)-10-formyltetrahydrofolate + 5-amino-1-(5-phospho-beta-D-ribosyl)imidazole-4-carboxamide = 5-formamido-1-(5-phospho-D-ribosyl)imidazole-4-carboxamide + (6S)-5,6,7,8-tetrahydrofolate. The catalysed reaction is IMP + H2O = 5-formamido-1-(5-phospho-D-ribosyl)imidazole-4-carboxamide. It participates in purine metabolism; IMP biosynthesis via de novo pathway; 5-formamido-1-(5-phospho-D-ribosyl)imidazole-4-carboxamide from 5-amino-1-(5-phospho-D-ribosyl)imidazole-4-carboxamide (10-formyl THF route): step 1/1. Its pathway is purine metabolism; IMP biosynthesis via de novo pathway; IMP from 5-formamido-1-(5-phospho-D-ribosyl)imidazole-4-carboxamide: step 1/1. The protein is Bifunctional purine biosynthesis protein PurH of Staphylococcus aureus (strain MSSA476).